The following is a 948-amino-acid chain: Bifunctional glutamine synthetase adenylyltransferase/adenylyl-removing enzyme (948 aa).

An adenylyl removase region spans residues 1 to 445 (MAPPPDTSGS…IFTEVIAEPP (445 aa)). Positions 451 to 948 (EPLLDGGEAE…WKQIIEAPVF (498 aa)) are adenylyl transferase.

The protein belongs to the GlnE family. Mg(2+) serves as cofactor.

It catalyses the reaction [glutamine synthetase]-O(4)-(5'-adenylyl)-L-tyrosine + phosphate = [glutamine synthetase]-L-tyrosine + ADP. The catalysed reaction is [glutamine synthetase]-L-tyrosine + ATP = [glutamine synthetase]-O(4)-(5'-adenylyl)-L-tyrosine + diphosphate. Its function is as follows. Involved in the regulation of glutamine synthetase GlnA, a key enzyme in the process to assimilate ammonia. When cellular nitrogen levels are high, the C-terminal adenylyl transferase (AT) inactivates GlnA by covalent transfer of an adenylyl group from ATP to specific tyrosine residue of GlnA, thus reducing its activity. Conversely, when nitrogen levels are low, the N-terminal adenylyl removase (AR) activates GlnA by removing the adenylyl group by phosphorolysis, increasing its activity. The regulatory region of GlnE binds the signal transduction protein PII (GlnB) which indicates the nitrogen status of the cell. The sequence is that of Bifunctional glutamine synthetase adenylyltransferase/adenylyl-removing enzyme from Methylococcus capsulatus (strain ATCC 33009 / NCIMB 11132 / Bath).